The sequence spans 342 residues: Holliday junction branch migration complex subunit RuvB (342 aa).

Positions 1 to 182 are large ATPase domain (RuvB-L); the sequence is MRIEALNTAP…FGINSRLDYY (182 aa). ATP-binding positions include isoleucine 21, arginine 22, glycine 63, lysine 66, threonine 67, threonine 68, 129–131, arginine 172, tyrosine 182, and arginine 219; that span reads EDY. Threonine 67 is a Mg(2+) binding site. Residues 183–253 form a small ATPAse domain (RuvB-S) region; sequence SPELLQSIIV…VARRTLESLE (71 aa). The interval 256-342 is head domain (RuvB-H); that stretch reads EGGLDDMDKK…DHGPLFDHNS (87 aa). Arginine 311 and arginine 316 together coordinate DNA.

This sequence belongs to the RuvB family. As to quaternary structure, homohexamer. Forms an RuvA(8)-RuvB(12)-Holliday junction (HJ) complex. HJ DNA is sandwiched between 2 RuvA tetramers; dsDNA enters through RuvA and exits via RuvB. An RuvB hexamer assembles on each DNA strand where it exits the tetramer. Each RuvB hexamer is contacted by two RuvA subunits (via domain III) on 2 adjacent RuvB subunits; this complex drives branch migration. In the full resolvosome a probable DNA-RuvA(4)-RuvB(12)-RuvC(2) complex forms which resolves the HJ.

The protein localises to the cytoplasm. It carries out the reaction ATP + H2O = ADP + phosphate + H(+). Functionally, the RuvA-RuvB-RuvC complex processes Holliday junction (HJ) DNA during genetic recombination and DNA repair, while the RuvA-RuvB complex plays an important role in the rescue of blocked DNA replication forks via replication fork reversal (RFR). RuvA specifically binds to HJ cruciform DNA, conferring on it an open structure. The RuvB hexamer acts as an ATP-dependent pump, pulling dsDNA into and through the RuvAB complex. RuvB forms 2 homohexamers on either side of HJ DNA bound by 1 or 2 RuvA tetramers; 4 subunits per hexamer contact DNA at a time. Coordinated motions by a converter formed by DNA-disengaged RuvB subunits stimulates ATP hydrolysis and nucleotide exchange. Immobilization of the converter enables RuvB to convert the ATP-contained energy into a lever motion, pulling 2 nucleotides of DNA out of the RuvA tetramer per ATP hydrolyzed, thus driving DNA branch migration. The RuvB motors rotate together with the DNA substrate, which together with the progressing nucleotide cycle form the mechanistic basis for DNA recombination by continuous HJ branch migration. Branch migration allows RuvC to scan DNA until it finds its consensus sequence, where it cleaves and resolves cruciform DNA. The polypeptide is Holliday junction branch migration complex subunit RuvB (Chlorobaculum parvum (strain DSM 263 / NCIMB 8327) (Chlorobium vibrioforme subsp. thiosulfatophilum)).